The following is a 642-amino-acid chain: Uromodulin (642 aa).

Residues M1–S24 form the signal peptide. N-linked (GlcNAc...) asparagine glycosylation is found at N25 and N38. The EGF-like 1 domain maps to E28–E64. Disulfide bonds link C32–C41, C35–C50, C52–C63, C69–C82, C77–C91, C93–C105, C111–C125, C119–C134, C136–C147, C149–C160, C154–C171, C175–C268, C196–C283, C218–C256, C224–C288, C249–C257, C298–C307, C301–C316, C318–C348, C336–C426, and C367–C390. Positions D65–T106 constitute an EGF-like 2; calcium-binding domain. N76 and N79 each carry an N-linked (GlcNAc...) asparagine glycan. Residues D107–E148 enclose the EGF-like 3; calcium-binding domain. Residues C149–Q172 are beta hairpin. Positions D173–S292 are D10C. The N-linked (GlcNAc...) asparagine glycan is linked to N233. N-linked (GlcNAc...) asparagine glycosylation occurs at N276. Residues S293 to I324 form the EGF-like 4 domain. N323 is a glycosylation site (N-linked (GlcNAc...) asparagine). The segment at E335–L430 is ZP-N. Residues E335 to S590 form the ZP domain. N-linked (GlcNAc...) asparagine glycans are attached at residues N397 and N448. The flexible ZP-N/ZP-C linker; important for secretion and polymerization into filaments stretch occupies residues D431–T454. Positions G455–Q465 are internal hydrophobic patch (IHP). Residues G455–S590 form a ZP-C region. Cystine bridges form between C507-C567, C528-C583, and C572-C579. N-linked (GlcNAc...) asparagine glycosylation occurs at N514. Residues R587–S590 form an essential for cleavage by HPN region. An external hydrophobic patch (EHP); regulates polymerization into filaments region spans residues V599–R607. A618 carries the GPI-anchor amidated alanine lipid modification. The propeptide at S619 to Q642 is removed in mature form.

Homodimer that then polymerizes into long filaments. The filaments can additionally assemble laterally to form a sheet. The filaments consist of a zigzag-shaped backbone with laterally protruding arms which interact with bacterial adhesin fimH. Two fimH molecules can bind to a single UMOD monomer. N-glycosylated. In terms of processing, proteolytically cleaved at a conserved C-terminal proteolytic cleavage site to generate the secreted form found in urine. This cleavage is catalyzed by HPN. Detected in urine (secreted form). Detected in kidney thick ascending limb epithelial cells (at protein level).

Its subcellular location is the secreted. It localises to the apical cell membrane. It is found in the basolateral cell membrane. The protein localises to the cell projection. The protein resides in the cilium membrane. Functionally, functions in biogenesis and organization of the apical membrane of epithelial cells of the thick ascending limb of Henle's loop (TALH), where it promotes formation of complex filamentous gel-like structure that may play a role in the water barrier permeability. May serve as a receptor for binding and endocytosis of cytokines (IL-1, IL-2) and TNF. Facilitates neutrophil migration across renal epithelia. Its function is as follows. In the urine, may contribute to colloid osmotic pressure, retards passage of positively charged electrolytes and inhibits formation of liquid containing supersaturated salts and subsequent formation of salt crystals. Protects against urinary tract infections by binding to type 1 fimbriated E.coli. Binds to the bacterial adhesin fimH which mediates the stable formation of bacterial aggregates, prevents the binding of E.coli to uroplakins UPK1A and UPK1B which act as urothelial receptors for type I fimbriae, and allows for pathogen clearance through micturation. Also promotes aggregation of other bacteria including K.pneumoniae, P.aeruginosa and S.mitis and so may also protect against other uropathogens. This Mus musculus (Mouse) protein is Uromodulin (Umod).